A 365-amino-acid chain; its full sequence is Succinyl-diaminopimelate desuccinylase (365 aa).

His-65 is a binding site for Zn(2+). Asp-67 is an active-site residue. Asp-96 serves as a coordination point for Zn(2+). Glu-126 (proton acceptor) is an active-site residue. Zn(2+) is bound by residues Glu-127, Glu-155, and His-340.

This sequence belongs to the peptidase M20A family. DapE subfamily. In terms of assembly, homodimer. It depends on Zn(2+) as a cofactor. Co(2+) is required as a cofactor.

The enzyme catalyses N-succinyl-(2S,6S)-2,6-diaminopimelate + H2O = (2S,6S)-2,6-diaminopimelate + succinate. The protein operates within amino-acid biosynthesis; L-lysine biosynthesis via DAP pathway; LL-2,6-diaminopimelate from (S)-tetrahydrodipicolinate (succinylase route): step 3/3. Functionally, catalyzes the hydrolysis of N-succinyl-L,L-diaminopimelic acid (SDAP), forming succinate and LL-2,6-diaminopimelate (DAP), an intermediate involved in the bacterial biosynthesis of lysine and meso-diaminopimelic acid, an essential component of bacterial cell walls. This chain is Succinyl-diaminopimelate desuccinylase, found in Campylobacter jejuni subsp. doylei (strain ATCC BAA-1458 / RM4099 / 269.97).